Here is a 292-residue protein sequence, read N- to C-terminus: Undecaprenyl-diphosphatase (292 aa).

Helical transmembrane passes span 87-107 (MGWY…LFEE), 113-133 (FRDL…LGMV), 190-210 (AFLL…KDIG), 219-239 (ATIV…AWFM), and 250-270 (FVYY…FGVL).

Belongs to the UppP family.

It localises to the cell membrane. The enzyme catalyses di-trans,octa-cis-undecaprenyl diphosphate + H2O = di-trans,octa-cis-undecaprenyl phosphate + phosphate + H(+). Its function is as follows. Catalyzes the dephosphorylation of undecaprenyl diphosphate (UPP). Confers resistance to bacitracin. The polypeptide is Undecaprenyl-diphosphatase (Thermobifida fusca (strain YX)).